The chain runs to 675 residues: Protein PALS1 (675 aa).

2 disordered regions span residues 1 to 32 (MTTS…HPKH) and 52 to 79 (RSAQ…KQEL). The required for the correct localization of PALS1 and PATJ at cell-cell contacts and the normal formation of tight junctions and adherens junctions stretch occupies residues 1-345 (MTTSYMNGHV…QQIKPPPAKE (345 aa)). A phosphoserine mark is found at S14 and S25. Residues 21-140 (LGLASPEEHP…LKHIQHTLVD (120 aa)) form an interaction with PARD6B region. Basic and acidic residues predominate over residues 54 to 79 (AQLERIRQQQEDMRRRREEEGKKQEL). Phosphoserine occurs at positions 83 and 84. 2 consecutive L27 domains span residues 120 to 177 (KILE…NKAS) and 179 to 235 (PFPL…MQLE). The segment at 181–243 (PLIANVQDLV…LEPITDERVY (63 aa)) is interaction with LIN7C. The region spanning 256 to 336 (IVRIEKARDI…TLTFVLIPSQ (81 aa)) is the PDZ domain. In terms of domain architecture, SH3 spans 345–417 (ETVIHVKAHF…PGKSFQQQRE (73 aa)). The 182-residue stretch at 479 to 660 (KRPIILIGPQ…AYQELLRLIN (182 aa)) folds into the Guanylate kinase-like domain. ATP is bound at residue 486–493 (GPQNCGQN).

It belongs to the MAGUK family. In terms of assembly, heterodimer with MPP1. Forms a heterotrimeric complex composed of PALS1, LIN7B and PATJ; the N-terminal L27 domain of PALS1 interacts with the L27 domain of PATJ and the C-terminal L27 domain of PALS1 interacts with the L27 domain of LIN7B. Component of a complex composed of PALS1, CRB1 and MPP4. Component of a complex whose core is composed of ARHGAP17, AMOT, PALS1, PATJ and PARD3/PAR3. Component of a complex composed of PALS1, CRB1 and EPB41L5. Within the complex, interacts (via HOOK domain) with EPB41L5 (via FERM domain), and interacts with CRB1 (via intracellular domain). Component of a complex composed of PALS1, MPP3 and CRB1; PALS1 acts as a bridging protein between MPP3 (via guanylate kinase-like domain) and CRB1. Component of a complex composed of CRB3, PALS1 and PATJ. As part of the Crumbs complex; interacts with WWP1, the interaction is enhanced by AMOTL2 and facilitates WWP1 localization to the plasma membrane. The Crumbs complex promotes monoubiquitination of AMOTL2 by WWP1, which activates the Hippo signaling pathway. Interacts (via PDZ domain) with PATJ (via N-terminus). Interacts with EZR. Interacts (via PDZ domain) with CRB1 (via C-terminal ERLI motif). While the PDZ domain is sufficient for interaction with CRB1, the adjacent SH3 and guanylate kinase-like domains are likely to contribute to a high affinity interaction. Interacts with WWTR1/TAZ (via WW domain). Interacts with MPP7. Interacts (via PDZ domain) with CRB3 (via C-terminus). Interacts with LIN7C. Interacts with MPDZ. Interacts with PARD6B. Interacts with SC6A1. Interacts with CDH5; the interaction promotes PALS1 localization to cell junctions and is required for CDH5-mediated vascular lumen formation and endothelial cell. Interacts with NPHP1 (via coiled coil and SH3 domains). Interacts with NPHP4. Interacts with CRB2.

It is found in the golgi apparatus. Its subcellular location is the cell membrane. The protein resides in the endomembrane system. It localises to the cell junction. The protein localises to the tight junction. It is found in the adherens junction. Its subcellular location is the cell projection. The protein resides in the axon. It localises to the perikaryon. The protein localises to the apical cell membrane. Its function is as follows. Plays a role in tight junction biogenesis and in the establishment of cell polarity in epithelial cells. Also involved in adherens junction biogenesis by ensuring correct localization of the exocyst complex protein EXOC4/SEC8 which allows trafficking of adherens junction structural component CDH1 to the cell surface. Plays a role through its interaction with CDH5 in vascular lumen formation and endothelial membrane polarity. Required during embryonic and postnatal retinal development. Required for the maintenance of cerebellar progenitor cells in an undifferentiated proliferative state, preventing premature differentiation, and is required for cerebellar histogenesis, fissure formation, cerebellar layer organization and cortical development. Plays a role in neuronal progenitor cell survival, potentially via promotion of mTOR signaling. Plays a role in the radial and longitudinal extension of the myelin sheath in Schwann cells. May modulate SC6A1/GAT1-mediated GABA uptake by stabilizing the transporter. May play a role in the T-cell receptor-mediated activation of NF-kappa-B. Required for localization of EZR to the apical membrane of parietal cells and may play a role in the dynamic remodeling of the apical cytoskeleton. Required for the normal polarized localization of the vesicular marker STX4. Required for the correct trafficking of the myelin proteins PMP22 and MAG. Involved in promoting phosphorylation and cytoplasmic retention of transcriptional coactivators YAP1 and WWTR1/TAZ which leads to suppression of TGFB1-dependent transcription of target genes such as CCN2/CTGF, SERPINE1/PAI1, SNAI1/SNAIL1 and SMAD7. This is Protein PALS1 from Rattus norvegicus (Rat).